The following is a 237-amino-acid chain: Ribonuclease 3 (237 aa).

Residues 4-130 (IQILFQTLNI…LFGAIYLDLG (127 aa)) form the RNase III domain. E45 provides a ligand contact to Mg(2+). D49 is a catalytic residue. Positions 116 and 119 each coordinate Mg(2+). Residue E119 is part of the active site. In terms of domain architecture, DRBM spans 154–222 (DFKTQLQEIV…AQQALSKVAK (69 aa)).

This sequence belongs to the ribonuclease III family. As to quaternary structure, homodimer. The cofactor is Mg(2+).

The protein localises to the cytoplasm. It catalyses the reaction Endonucleolytic cleavage to 5'-phosphomonoester.. Functionally, digests double-stranded RNA. Involved in the processing of primary rRNA transcript to yield the immediate precursors to the large and small rRNAs (23S and 16S). Processes some mRNAs, and tRNAs when they are encoded in the rRNA operon. Processes pre-crRNA and tracrRNA of type II CRISPR loci if present in the organism. The chain is Ribonuclease 3 from Aster yellows witches'-broom phytoplasma (strain AYWB).